The primary structure comprises 363 residues: 3-dehydroquinate synthase (363 aa).

NAD(+) contacts are provided by residues 134–135 (TT), Lys-147, and Lys-156. Zn(2+) contacts are provided by Glu-189, His-254, and His-271.

Belongs to the sugar phosphate cyclases superfamily. Dehydroquinate synthase family. The cofactor is Co(2+). Zn(2+) serves as cofactor. It depends on NAD(+) as a cofactor.

It localises to the cytoplasm. It carries out the reaction 7-phospho-2-dehydro-3-deoxy-D-arabino-heptonate = 3-dehydroquinate + phosphate. It functions in the pathway metabolic intermediate biosynthesis; chorismate biosynthesis; chorismate from D-erythrose 4-phosphate and phosphoenolpyruvate: step 2/7. Its function is as follows. Catalyzes the conversion of 3-deoxy-D-arabino-heptulosonate 7-phosphate (DAHP) to dehydroquinate (DHQ). The protein is 3-dehydroquinate synthase of Prochlorococcus marinus (strain AS9601).